A 65-amino-acid polypeptide reads, in one-letter code: Large ribosomal subunit protein bL32 (65 aa).

It belongs to the bacterial ribosomal protein bL32 family.

The polypeptide is Large ribosomal subunit protein bL32 (Phytoplasma australiense).